The following is a 292-amino-acid chain: 4-hydroxy-tetrahydrodipicolinate synthase (292 aa).

T44 serves as a coordination point for pyruvate. The active-site Proton donor/acceptor is the Y132. K161 acts as the Schiff-base intermediate with substrate in catalysis. I203 provides a ligand contact to pyruvate.

This sequence belongs to the DapA family. Homotetramer; dimer of dimers.

It localises to the cytoplasm. The catalysed reaction is L-aspartate 4-semialdehyde + pyruvate = (2S,4S)-4-hydroxy-2,3,4,5-tetrahydrodipicolinate + H2O + H(+). Its pathway is amino-acid biosynthesis; L-lysine biosynthesis via DAP pathway; (S)-tetrahydrodipicolinate from L-aspartate: step 3/4. Its function is as follows. Catalyzes the condensation of (S)-aspartate-beta-semialdehyde [(S)-ASA] and pyruvate to 4-hydroxy-tetrahydrodipicolinate (HTPA). This Fervidobacterium nodosum (strain ATCC 35602 / DSM 5306 / Rt17-B1) protein is 4-hydroxy-tetrahydrodipicolinate synthase.